The sequence spans 311 residues: DNA-directed RNA polymerase subunit alpha (311 aa).

The tract at residues 1 to 228 is alpha N-terminal domain (alpha-NTD); the sequence is MQYQIERIDH…ELFQPLATVT (228 aa). An alpha C-terminal domain (alpha-CTD) region spans residues 239 to 311; the sequence is PSPEAQIPLE…ISIPQSRTSV (73 aa).

The protein belongs to the RNA polymerase alpha chain family. In cyanobacteria the RNAP catalytic core is composed of 2 alpha, 1 beta, 1 beta', 1 gamma and 1 omega subunit. When a sigma factor is associated with the core the holoenzyme is formed, which can initiate transcription.

The catalysed reaction is RNA(n) + a ribonucleoside 5'-triphosphate = RNA(n+1) + diphosphate. DNA-dependent RNA polymerase catalyzes the transcription of DNA into RNA using the four ribonucleoside triphosphates as substrates. In Prochlorococcus marinus (strain MIT 9312), this protein is DNA-directed RNA polymerase subunit alpha.